A 63-amino-acid chain; its full sequence is SSKWEACCDRCACTKSIPPQCHCADIRLNSCHSACESCACTRSIPAKCRCFDITDFCYKPCSG.

Intrachain disulfides connect Cys7-Cys61, Cys8-Cys23, Cys11-Cys57, Cys13-Cys21, Cys31-Cys38, Cys35-Cys50, and Cys40-Cys48.

Functionally, inhibits trypsin, chymotrypsin, plasmin and factor XIIa. Does not inhibit factor Xa, thrombin and plasma kallikrein. The chain is Bowman-birk type proteinase inhibitor from Amburana acreana (Cerejeira).